We begin with the raw amino-acid sequence, 446 residues long: Glutamine synthetase (446 aa).

The 88-residue stretch at Arg-15–Gly-102 folds into the GS beta-grasp domain. The GS catalytic domain maps to Ser-109 to Leu-446. Mg(2+) is bound by residues Glu-132 and Glu-134. ATP is bound at residue Glu-184. Mg(2+) is bound by residues Glu-189 and Glu-196. Gly-241 provides a ligand contact to L-glutamate. Position 245 (His-245) interacts with Mg(2+). ATP is bound by residues His-247–Ser-249 and Ser-249. L-glutamate-binding residues include Arg-298, Glu-304, and Arg-316. Positions 316 and 321 each coordinate ATP. Glu-336 is a Mg(2+) binding site. Arg-338 is an L-glutamate binding site. An Isoglutamyl lysine isopeptide (Lys-Gln) (interchain with Q-Cter in protein Pup) cross-link involves residue Lys-363.

The protein belongs to the glutamine synthetase family. Oligomer of 12 subunits arranged in the form of two hexagons. In its feedback-inhibited form, interacts with TnrA in order to block its DNA-binding activity. Mg(2+) serves as cofactor.

Its subcellular location is the cytoplasm. The catalysed reaction is L-glutamate + NH4(+) + ATP = L-glutamine + ADP + phosphate + H(+). With respect to regulation, inhibited by glutamine. Its function is as follows. Glutamine synthetase (GS) is an unusual multitasking protein that functions as an enzyme, a transcription coregulator, and a chaperone in ammonium assimilation and in the regulation of genes involved in nitrogen metabolism. It catalyzes the ATP-dependent biosynthesis of glutamine from glutamate and ammonia. Feedback-inhibited GlnA also interacts with and regulates the activity of the transcriptional regulator TnrA. During nitrogen limitation, TnrA is in its DNA-binding active state and turns on the transcription of genes required for nitrogen assimilation. Under conditions of nitrogen excess, feedback-inhibited GlnA forms a stable complex with TnrA, which inhibits its DNA-binding activity. In contrast, feedback-inhibited GlnA acts as a chaperone to stabilize the DNA-binding activity of GlnR, which represses the transcription of nitrogen assimilation genes. The sequence is that of Glutamine synthetase from Mycolicibacterium smegmatis (strain ATCC 700084 / mc(2)155) (Mycobacterium smegmatis).